Reading from the N-terminus, the 530-residue chain is UDP-glucuronosyltransferase 2A3 (530 aa).

An N-terminal signal peptide occupies residues 1–23 (MAPGKLASAVLLLLLCCAGSGFC). At 24-494 (GKVLVWPCEM…SWFQYHSLDV (471 aa)) the chain is on the extracellular side. Residue asparagine 316 is glycosylated (N-linked (GlcNAc...) asparagine). Residues 495 to 515 (IGFLLACVASAILLVTKCCLF) form a helical membrane-spanning segment. Residues 516–530 (SFQNFIKIGKRIKKE) are Cytoplasmic-facing.

This sequence belongs to the UDP-glycosyltransferase family. As to expression, specifically expressed in liver and small intestine.

Its subcellular location is the membrane. The enzyme catalyses glucuronate acceptor + UDP-alpha-D-glucuronate = acceptor beta-D-glucuronoside + UDP + H(+). Its function is as follows. UDP-glucuronosyltransferases catalyze phase II biotransformation reactions in which lipophilic substrates are conjugated with glucuronic acid to increase water solubility and enhance excretion. They are of major importance in the conjugation and subsequent elimination of potentially toxic xenobiotics and endogenous compounds. The sequence is that of UDP-glucuronosyltransferase 2A3 (UGT2A3) from Cavia porcellus (Guinea pig).